The primary structure comprises 313 residues: Ribosomal RNA small subunit methyltransferase H (313 aa).

S-adenosyl-L-methionine is bound by residues 35-37 (GGH), Asp55, Phe79, Asp101, and Gln108.

It belongs to the methyltransferase superfamily. RsmH family.

Its subcellular location is the cytoplasm. The enzyme catalyses cytidine(1402) in 16S rRNA + S-adenosyl-L-methionine = N(4)-methylcytidine(1402) in 16S rRNA + S-adenosyl-L-homocysteine + H(+). Specifically methylates the N4 position of cytidine in position 1402 (C1402) of 16S rRNA. The chain is Ribosomal RNA small subunit methyltransferase H from Escherichia coli O127:H6 (strain E2348/69 / EPEC).